Consider the following 82-residue polypeptide: Large ribosomal subunit protein uL23 (82 aa).

This sequence belongs to the universal ribosomal protein uL23 family. Part of the 50S ribosomal subunit. Contacts protein L29.

Its function is as follows. Binds to 23S rRNA. One of the proteins that surrounds the polypeptide exit tunnel on the outside of the ribosome. The chain is Large ribosomal subunit protein uL23 from Sulfolobus acidocaldarius (strain ATCC 33909 / DSM 639 / JCM 8929 / NBRC 15157 / NCIMB 11770).